The following is an 802-amino-acid chain: Valine--tRNA ligase (802 aa).

Residues 45-55 (PTISGQLHIGH) carry the 'HIGH' region motif. The short motif at 524–528 (KMSKS) is the 'KMSKS' region element. Lys527 is a binding site for ATP.

This sequence belongs to the class-I aminoacyl-tRNA synthetase family. ValS type 2 subfamily. In terms of assembly, monomer.

The protein resides in the cytoplasm. The catalysed reaction is tRNA(Val) + L-valine + ATP = L-valyl-tRNA(Val) + AMP + diphosphate. Catalyzes the attachment of valine to tRNA(Val). As ValRS can inadvertently accommodate and process structurally similar amino acids such as threonine, to avoid such errors, it has a 'posttransfer' editing activity that hydrolyzes mischarged Thr-tRNA(Val) in a tRNA-dependent manner. This is Valine--tRNA ligase from Ehrlichia canis (strain Jake).